A 295-amino-acid chain; its full sequence is uncharacterized protein (295 aa).

An N-terminal signal peptide occupies residues 1-26; that stretch reads MKKYLALAAIVAICALWLTQNSNFEA.

This is an uncharacterized protein from Archaeoglobus fulgidus (strain ATCC 49558 / DSM 4304 / JCM 9628 / NBRC 100126 / VC-16).